The chain runs to 564 residues: Formate--tetrahydrofolate ligase (564 aa).

ATP is bound at residue 65–72 (TPLGEGKT).

It belongs to the formate--tetrahydrofolate ligase family.

The catalysed reaction is (6S)-5,6,7,8-tetrahydrofolate + formate + ATP = (6R)-10-formyltetrahydrofolate + ADP + phosphate. It participates in one-carbon metabolism; tetrahydrofolate interconversion. This chain is Formate--tetrahydrofolate ligase, found in Roseiflexus sp. (strain RS-1).